A 190-amino-acid polypeptide reads, in one-letter code: Remorin (190 aa).

The segment covering 1-12 (MAEEQKTSKVDV) has biased composition (basic and acidic residues). 2 disordered regions span residues 1-45 (MAEE…VESK) and 50-69 (VEKP…SADR). S14 carries the post-translational modification Phosphoserine. T58 carries the post-translational modification Phosphothreonine. The stretch at 92-147 (EKSKAENRAQKKISDVHAWENSKKAAVEAQLRKIEEKLEKKKAQYGEKMKNKVAAI) forms a coiled coil.

The protein belongs to the remorin family. May polymerize to form filamentous structures. In terms of tissue distribution, expressed in roots, leaves, stems, flowers and siliques, with a maximal expression in apical regions.

Functionally, exhibits a non sequence-specific DNA-binding activity. In Arabidopsis thaliana (Mouse-ear cress), this protein is Remorin (DBP).